An 83-amino-acid polypeptide reads, in one-letter code: Bublin coiled-coil protein (83 aa).

A disordered region spans residues 1 to 25; the sequence is MSGPNGDLGMPVDAGTEGENDSFGE. Residues 25–74 are a coiled coil; that stretch reads EAEYAAINSMLDQINSCLDHLEEKNDHLHARLQELLESNRQTRLEFQQQL. Ser82 carries the phosphoserine modification.

The protein belongs to the UPF0184 (EST00098) family.

The protein localises to the cell junction. It is found in the cytoplasm. The protein resides in the cytoskeleton. Functionally, essential for intermediate filament organization in intestinal cells, interacts with intermediate filament and regulates intestinal lumen morphology. This is Bublin coiled-coil protein from Mus musculus (Mouse).